We begin with the raw amino-acid sequence, 66 residues long: Toxin Aah6 (66 aa).

The LCN-type CS-alpha/beta domain occupies 2-65 (RDGYVVKNGT…LYGDDGTYCS (64 aa)). N-linked (GlcNAc...) asparagine glycosylation is present at N9. 4 cysteine pairs are disulfide-bonded: C13-C64, C17-C40, C26-C45, and C30-C47.

The protein belongs to the long (4 C-C) scorpion toxin superfamily. Sodium channel inhibitor family. Beta subfamily. N-glycans are core-fucosylated, heterogeneous and short which could be the result of extensive trimming. Expressed by the venom gland.

The protein localises to the secreted. Beta toxins bind voltage-independently at site-4 of sodium channels and shift the voltage of activation toward more negative potentials thereby affecting sodium channel activation and promoting spontaneous and repetitive firing. This toxin is active only on insects. This toxin has very low anti-insect activity. This chain is Toxin Aah6, found in Androctonus australis (Sahara scorpion).